The primary structure comprises 393 residues: Chorismate synthase (393 aa).

The NADP(+) site is built by arginine 40 and arginine 46. FMN contacts are provided by residues 129–131 (RAS), 250–251 (QA), glycine 301, 316–320 (KPIST), and arginine 342.

It belongs to the chorismate synthase family. As to quaternary structure, homotetramer. FMNH2 is required as a cofactor.

The catalysed reaction is 5-O-(1-carboxyvinyl)-3-phosphoshikimate = chorismate + phosphate. Its pathway is metabolic intermediate biosynthesis; chorismate biosynthesis; chorismate from D-erythrose 4-phosphate and phosphoenolpyruvate: step 7/7. Functionally, catalyzes the anti-1,4-elimination of the C-3 phosphate and the C-6 proR hydrogen from 5-enolpyruvylshikimate-3-phosphate (EPSP) to yield chorismate, which is the branch point compound that serves as the starting substrate for the three terminal pathways of aromatic amino acid biosynthesis. This reaction introduces a second double bond into the aromatic ring system. This chain is Chorismate synthase, found in Acidobacterium capsulatum (strain ATCC 51196 / DSM 11244 / BCRC 80197 / JCM 7670 / NBRC 15755 / NCIMB 13165 / 161).